Consider the following 137-residue polypeptide: Small ribosomal subunit protein bS6 (137 aa).

A disordered region spans residues 96–137 (ITEASPMAKAKDERDTRRSSEERAPRAEATEEVKESAENTAE). Over residues 104 to 137 (KAKDERDTRRSSEERAPRAEATEEVKESAENTAE) the composition is skewed to basic and acidic residues.

The protein belongs to the bacterial ribosomal protein bS6 family.

Functionally, binds together with bS18 to 16S ribosomal RNA. The sequence is that of Small ribosomal subunit protein bS6 from Shewanella piezotolerans (strain WP3 / JCM 13877).